The primary structure comprises 275 residues: Ribosomal RNA small subunit methyltransferase A (275 aa).

Residues asparagine 28, leucine 30, glycine 55, glutamate 77, aspartate 103, and asparagine 123 each contribute to the S-adenosyl-L-methionine site.

This sequence belongs to the class I-like SAM-binding methyltransferase superfamily. rRNA adenine N(6)-methyltransferase family. RsmA subfamily.

It localises to the cytoplasm. It carries out the reaction adenosine(1518)/adenosine(1519) in 16S rRNA + 4 S-adenosyl-L-methionine = N(6)-dimethyladenosine(1518)/N(6)-dimethyladenosine(1519) in 16S rRNA + 4 S-adenosyl-L-homocysteine + 4 H(+). Functionally, specifically dimethylates two adjacent adenosines (A1518 and A1519) in the loop of a conserved hairpin near the 3'-end of 16S rRNA in the 30S particle. May play a critical role in biogenesis of 30S subunits. The sequence is that of Ribosomal RNA small subunit methyltransferase A from Allorhizobium ampelinum (strain ATCC BAA-846 / DSM 112012 / S4) (Agrobacterium vitis (strain S4)).